The following is a 672-amino-acid chain: uncharacterized protein (672 aa).

The signal sequence occupies residues 1-24 (MKTLKVLKIFIIVYISSVSLESFA). 2 helical membrane passes run 226–246 (IIGAALILYTMFFAFNMALNK) and 254–274 (ITLFIIKFLFVVYFSIGLGPL). Polar residues predominate over residues 363-372 (SNGTSGNNKP). The tract at residues 363-384 (SNGTSGNNKPIPNFDPDGKKDR) is disordered. 4 consecutive transmembrane segments (helical) span residues 410 to 430 (IILVAGMVFSVIFLSILLYFI), 436 to 456 (CMVTIYVMTYISPIFIPMVLF), 469 to 489 (VCISCALQPAVVAGFIALLIT), and 562 to 582 (VVSILAELLCVLIFSVIFYYF). Residues 628–646 (HGKSSLGDKPDIGNKRKDG) show a composition bias toward basic and acidic residues. The segment at 628-672 (HGKSSLGDKPDIGNKRKDGAQQGEDAVNSSGGEVADLASGSGGGK) is disordered.

This sequence belongs to the TrbL/VirB6 family.

The protein localises to the cell membrane. This is an uncharacterized protein from Rickettsia prowazekii (strain Madrid E).